Reading from the N-terminus, the 352-residue chain is S-adenosylmethionine:tRNA ribosyltransferase-isomerase (352 aa).

This sequence belongs to the QueA family. Monomer.

The protein localises to the cytoplasm. It carries out the reaction 7-aminomethyl-7-carbaguanosine(34) in tRNA + S-adenosyl-L-methionine = epoxyqueuosine(34) in tRNA + adenine + L-methionine + 2 H(+). The protein operates within tRNA modification; tRNA-queuosine biosynthesis. Its function is as follows. Transfers and isomerizes the ribose moiety from AdoMet to the 7-aminomethyl group of 7-deazaguanine (preQ1-tRNA) to give epoxyqueuosine (oQ-tRNA). The chain is S-adenosylmethionine:tRNA ribosyltransferase-isomerase from Paraburkholderia phytofirmans (strain DSM 17436 / LMG 22146 / PsJN) (Burkholderia phytofirmans).